The sequence spans 337 residues: Meiotic driver wtf4 (337 aa).

The segment covering 1-29 (MKNKDYPLRSSMDELSTKNDNEIDLEKGP) has biased composition (basic and acidic residues). The interval 1 to 40 (MKNKDYPLRSSMDELSTKNDNEIDLEKGPLPEYNSEDEST) is disordered. Helical transmembrane passes span 89-109 (LLISVLAVIVVFFTAWVCVNP), 119-139 (AFFVTIGITCPILLITIFCFF), 149-169 (CIKVTVIFLAQCVKVTAVGLY), 176-196 (VVIIWLLWVVICYTLFLRSKF), 210-230 (CSISAALLLFLLYVRLPFWTL), and 234-254 (FSGLFQVLGVQSCVVIVTKGL).

Belongs to the WTF family. In terms of assembly, homomer. Forms protein aggregates. The two isoforms can interact with each other and with themselves. High sequence similarity is required for their interaction.

The protein resides in the spore membrane. Its subcellular location is the vacuole membrane. It localises to the ascus epiplasm. It is found in the cytoplasm. The protein localises to the endoplasmic reticulum membrane. Its function is as follows. Promotes unequal transmission of alleles from the parental zygote to progeny spores by acting as poison/antidote system where the poison and antidote proteins are produced from the same locus; the poison component is trans-acting and targets all spores within an ascus whereas the antidote component is spore-specific, leading to poisoning of all progeny that do not inherit the allele. Localizes isoform 2 to the vacuole thereby facilitating its degradation. Functionally, forms toxic aggregates that disrupt spore maturation. The protein is Meiotic driver wtf4 of Schizosaccharomyces kambucha (Fission yeast).